The primary structure comprises 94 residues: Co-chaperonin GroES (94 aa).

The protein belongs to the GroES chaperonin family. In terms of assembly, heptamer of 7 subunits arranged in a ring. Interacts with the chaperonin GroEL.

The protein localises to the cytoplasm. In terms of biological role, together with the chaperonin GroEL, plays an essential role in assisting protein folding. The GroEL-GroES system forms a nano-cage that allows encapsulation of the non-native substrate proteins and provides a physical environment optimized to promote and accelerate protein folding. GroES binds to the apical surface of the GroEL ring, thereby capping the opening of the GroEL channel. The protein is Co-chaperonin GroES of Parageobacillus thermoglucosidasius (Geobacillus thermoglucosidasius).